A 358-amino-acid polypeptide reads, in one-letter code: Porphobilinogen deaminase, chloroplastic (358 aa).

A signal peptide spans methionine 1–alanine 24. At cysteine 290 the chain carries S-(dipyrrolylmethanemethyl)cysteine.

This sequence belongs to the HMBS family. Requires dipyrromethane as cofactor.

Its subcellular location is the plastid. It is found in the chloroplast. It catalyses the reaction 4 porphobilinogen + H2O = hydroxymethylbilane + 4 NH4(+). It functions in the pathway porphyrin-containing compound metabolism; protoporphyrin-IX biosynthesis; coproporphyrinogen-III from 5-aminolevulinate: step 2/4. Its pathway is porphyrin-containing compound metabolism; chlorophyll biosynthesis. Its function is as follows. Tetrapolymerization of the monopyrrole PBG into the hydroxymethylbilane pre-uroporphyrinogen in several discrete steps. The protein is Porphobilinogen deaminase, chloroplastic (HEMC) of Oryza sativa subsp. japonica (Rice).